A 441-amino-acid polypeptide reads, in one-letter code: MAQIFKATKKPLKQQSLVLDITAMDHHGRGIAKHNNKVCFVSNALPNEQVKATIIADKARYSEAQTHKVLQASEYRVAPFCEHYNQCGGCQLQHLDSSQQVVEKQIAVSKLFEKFAKLDELNWQAPLLSKATHYRRSARLAVMFDKKAKKMHVGYRASGSKSIISINECPVLSEVFANVFTVFDNLINQHKALHSVSHLQLCQGDEQNFVIIRHTKPISEDIKALVAQSAAEQQWQLVWQSESEVIEHSHLAMPFYALEELGLKFEFGLNNFIQVNASVNQAMLKQAQNWLALKGDENVLDLFCGIGNFSLVLAKQAKTVIGVEGVASAVAMATQNAHTNSITNAQFNCFDLTNKIETASWFNKNLDVLVLDPSRTGAITVLEQLPLKQFKTILYVSCDPVTLARDSAIISQAGFELHKIGLMNMFPHTGHIETMALFQRR.

The TRAM domain occupies 10-68 (KPLKQQSLVLDITAMDHHGRGIAKHNNKVCFVSNALPNEQVKATIIADKARYSEAQTHK). Residues C81, C87, C90, and C169 each coordinate [4Fe-4S] cluster. S-adenosyl-L-methionine is bound by residues Q274, F303, N308, E324, D351, and D372. C398 serves as the catalytic Nucleophile.

The protein belongs to the class I-like SAM-binding methyltransferase superfamily. RNA M5U methyltransferase family. RlmD subfamily.

The enzyme catalyses uridine(1939) in 23S rRNA + S-adenosyl-L-methionine = 5-methyluridine(1939) in 23S rRNA + S-adenosyl-L-homocysteine + H(+). Functionally, catalyzes the formation of 5-methyl-uridine at position 1939 (m5U1939) in 23S rRNA. The protein is 23S rRNA (uracil(1939)-C(5))-methyltransferase RlmD of Pseudoalteromonas translucida (strain TAC 125).